The chain runs to 468 residues: Glutamate--tRNA ligase 2 (468 aa).

The short motif at 11 to 21 (PSPTGFLHIGG) is the 'HIGH' region element. Residues 239–243 (KLSKR) carry the 'KMSKS' region motif. Residue Lys242 participates in ATP binding.

It belongs to the class-I aminoacyl-tRNA synthetase family. Glutamate--tRNA ligase type 1 subfamily. As to quaternary structure, monomer.

Its subcellular location is the cytoplasm. The enzyme catalyses tRNA(Glu) + L-glutamate + ATP = L-glutamyl-tRNA(Glu) + AMP + diphosphate. Functionally, catalyzes the attachment of glutamate to tRNA(Glu) in a two-step reaction: glutamate is first activated by ATP to form Glu-AMP and then transferred to the acceptor end of tRNA(Glu). The sequence is that of Glutamate--tRNA ligase 2 from Ruegeria pomeroyi (strain ATCC 700808 / DSM 15171 / DSS-3) (Silicibacter pomeroyi).